We begin with the raw amino-acid sequence, 606 residues long: Chaperone protein DnaK (606 aa).

Threonine 174 bears the Phosphothreonine; by autocatalysis mark. Residues 578–606 (YTQAGPQGGTNPGGQGGTDGNVNTDYKVY) form a disordered region. The span at 583-596 (PQGGTNPGGQGGTD) shows a compositional bias: gly residues.

Belongs to the heat shock protein 70 family.

In terms of biological role, acts as a chaperone. The polypeptide is Chaperone protein DnaK (Caldicellulosiruptor saccharolyticus (strain ATCC 43494 / DSM 8903 / Tp8T 6331)).